Here is a 437-residue protein sequence, read N- to C-terminus: Adenylosuccinate synthetase (437 aa).

GTP-binding positions include Gly-12 to Lys-18 and Gly-40 to Thr-42. Asp-13 (proton acceptor) is an active-site residue. 2 residues coordinate Mg(2+): Asp-13 and Gly-40. IMP is bound by residues Asp-13–Lys-16, Asn-38–His-41, Thr-131, Arg-145, Gln-225, and Thr-240. His-41 functions as the Proton donor in the catalytic mechanism. Residues Thr-281 to Phe-304 are disordered. The segment covering Gly-288 to Glu-303 has biased composition (basic and acidic residues). Thr-306–Arg-312 contributes to the substrate binding site. IMP is bound at residue Arg-310. GTP-binding positions include Arg-312, Lys-338–Asp-340, and Ser-420–Ser-422.

The protein belongs to the adenylosuccinate synthetase family. In terms of assembly, homodimer. Mg(2+) is required as a cofactor.

The protein resides in the cytoplasm. The enzyme catalyses IMP + L-aspartate + GTP = N(6)-(1,2-dicarboxyethyl)-AMP + GDP + phosphate + 2 H(+). The protein operates within purine metabolism; AMP biosynthesis via de novo pathway; AMP from IMP: step 1/2. Plays an important role in the de novo pathway of purine nucleotide biosynthesis. Catalyzes the first committed step in the biosynthesis of AMP from IMP. The chain is Adenylosuccinate synthetase from Ruegeria sp. (strain TM1040) (Silicibacter sp.).